The following is a 546-amino-acid chain: Thermosome subunit beta (546 aa).

Belongs to the TCP-1 chaperonin family. As to quaternary structure, forms a Heterooligomeric complex of two stacked eight-membered rings.

Functionally, molecular chaperone; binds unfolded polypeptides in vitro, and has a weak ATPase activity. In Thermococcus kodakarensis (strain ATCC BAA-918 / JCM 12380 / KOD1) (Pyrococcus kodakaraensis (strain KOD1)), this protein is Thermosome subunit beta (thsB).